The primary structure comprises 590 residues: Probable metalloendopeptidase G1-type (590 aa).

Position 41 (His41) interacts with Zn(2+). The active site involves Glu44. His45 is a binding site for Zn(2+).

Belongs to the peptidase M44 family. Zn(2+) serves as cofactor.

Functionally, seems to be involved in viral proteins maturation by cleavage at Ala-Gly-|-Xaa motifs. The polypeptide is Probable metalloendopeptidase G1-type (GP045L) (Oryctolagus cuniculus (Rabbit)).